Here is an 837-residue protein sequence, read N- to C-terminus: MPAKKEQIQLQKEILNQEMWDELLSLEGLTVIDVYQKWCGPCAAVLSLFKRLRNEIGDDLLRFAVAEADSIETLERYRGKCEPCFLRYGSGQLVNVVRGVNAPALLKNVERELKQEHKVLEEGVERVVIKDPLLAAFEAEEQQAAQAEELEKKRLEEEARIKEIKELGDAGEVSVRPVSQGTVDTLMHGRQDGPQTEPVPKEVTVVLIKPDAVANGHVDSIIAKIEEHGFEILTTEDKTLTEDEAREFYKQHEEEEHFEVLVTFMASGPSKILVLTRGDTGEGVVSEVRNLLGPKDIEVAKEEAPDSLRAQFGTDKKMNAMHGADSKETAAREMAFLLPNFSVPIVPGTGPPPTIEKTLALIRPSALKDHKDEMLQKIQEAGFEVCLQKMVQLTEDQAKEFYKEQEGTPHFEDLIREMTSGEVLALGLAKESAIQSWREFIGPTTIDEAKEKAPDSLRAQYSIPDTQVNVVHGSDSVDTAEKELGFFFPKQTTLAVIKPDAAGEHKEAIIEKIKEAGFNISLQRDVELNKELASKLYLEHEGKEFYENLIDHMSSGLSMVMVLSREDAVDGWRTLMGPTDPDYAREHAPESLRALLGKDVLQNAVHGSSNPEEAKTRIERLFPDVEVLPGGEVKDSVASISMEQSQVKGEGEEGGEEQTEQPAGEGEEQQAEQPAAESGEQQAEGGEPATETATEGGEQQAEQPPAEGGEKPAEEETQQTQEGETPAADEAQAEQTQEGETPAADEAQAEQTQEGEEQKPAEEEAAPATEETAAEQAPAAEETQQTQEGEEKKEETEQTQDAPAAGGGEEAVATEGGGEGDAKPEGGEEKTEEQTAS.

A Thioredoxin domain is found at glutamate 6 to glutamine 115. A disulfide bond links cysteine 39 and cysteine 42. 3 NDK regions span residues lysine 201–isoleucine 345, isoleucine 355–glutamine 491, and threonine 493–proline 629. The tract at residues valine 633–serine 837 is disordered. Polar residues predominate over residues alanine 638–valine 647. Over residues glutamate 652–glutamine 670 the composition is skewed to acidic residues. Low complexity-rich tracts occupy residues alanine 671–glutamate 707, glutamine 718–threonine 752, and alanine 766–glutamine 787. A compositionally biased stretch (gly residues) spans alanine 805 to glutamate 819. Residues glycine 820–serine 837 show a composition bias toward basic and acidic residues.

This sequence in the C-terminal section; belongs to the NDK family. Monomer. In terms of tissue distribution, testis-specific. In sperm, it is a component of the arm dynein of sperm axoneme.

Probably required during the final stages of sperm tail maturation in the testis and/or epididymis, where extensive disulfide bonding of fibrous sheath (FS) proteins occurs. In vitro, it has neither nucleoside diphosphate kinase (NDPK) activity nor reducing activity on disulfide bonds. Exhibits a 3'-5' exonuclease activity with a preference for single-stranded DNA, suggesting roles in DNA proofreading and repair. The polypeptide is Thioredoxin domain-containing protein 3 homolog (NME8) (Heliocidaris crassispina (Sea urchin)).